Consider the following 94-residue polypeptide: Putative septation protein SpoVG (94 aa).

This sequence belongs to the SpoVG family.

In terms of biological role, could be involved in septation. The polypeptide is Putative septation protein SpoVG (Acetivibrio thermocellus (strain ATCC 27405 / DSM 1237 / JCM 9322 / NBRC 103400 / NCIMB 10682 / NRRL B-4536 / VPI 7372) (Clostridium thermocellum)).